The primary structure comprises 326 residues: Vitamin B12 import system permease protein BtuC (326 aa).

The next 9 helical transmembrane spans lie at 15–35 (WLLSLSLLVLLATLLSLCAGE), 61–81 (LAVLLVGAALALSGAVMQALF), 88–108 (PGLLGVSNGAGVGLIAAVLLG), 112–132 (LPGWALGLCAIAGALIITLIL), 146–166 (LLAGVALGIICSALMTWAIYF), 184–204 (GGVDWQQSWLMIALIPVLIWI), 240–260 (GWMVGVSVAMAGAIGFIGLVI), 274–294 (VLLPGCALAGAIALLLADVVA), and 302–322 (ELPIGVVTATLGAPVFIWLLL).

The protein belongs to the binding-protein-dependent transport system permease family. FecCD subfamily. As to quaternary structure, the complex is composed of two ATP-binding proteins (BtuD), two transmembrane proteins (BtuC) and a solute-binding protein (BtuF).

The protein resides in the cell inner membrane. In terms of biological role, part of the ABC transporter complex BtuCDF involved in vitamin B12 import. Involved in the translocation of the substrate across the membrane. This is Vitamin B12 import system permease protein BtuC from Salmonella enteritidis PT4 (strain P125109).